The primary structure comprises 262 residues: tRNA (guanine-N(1)-)-methyltransferase (262 aa).

Residues Gly113 and 137–142 (IGDYVL) contribute to the S-adenosyl-L-methionine site.

Belongs to the RNA methyltransferase TrmD family. Homodimer.

It is found in the cytoplasm. It carries out the reaction guanosine(37) in tRNA + S-adenosyl-L-methionine = N(1)-methylguanosine(37) in tRNA + S-adenosyl-L-homocysteine + H(+). In terms of biological role, specifically methylates guanosine-37 in various tRNAs. This chain is tRNA (guanine-N(1)-)-methyltransferase, found in Saccharopolyspora erythraea (strain ATCC 11635 / DSM 40517 / JCM 4748 / NBRC 13426 / NCIMB 8594 / NRRL 2338).